The sequence spans 492 residues: Glutamyl-tRNA(Gln) amidotransferase subunit A (492 aa).

Residues Lys78 and Ser158 each act as charge relay system in the active site. Ser182 functions as the Acyl-ester intermediate in the catalytic mechanism.

The protein belongs to the amidase family. GatA subfamily. In terms of assembly, heterotrimer of A, B and C subunits.

The catalysed reaction is L-glutamyl-tRNA(Gln) + L-glutamine + ATP + H2O = L-glutaminyl-tRNA(Gln) + L-glutamate + ADP + phosphate + H(+). Allows the formation of correctly charged Gln-tRNA(Gln) through the transamidation of misacylated Glu-tRNA(Gln) in organisms which lack glutaminyl-tRNA synthetase. The reaction takes place in the presence of glutamine and ATP through an activated gamma-phospho-Glu-tRNA(Gln). This is Glutamyl-tRNA(Gln) amidotransferase subunit A from Orientia tsutsugamushi (strain Ikeda) (Rickettsia tsutsugamushi).